A 215-amino-acid polypeptide reads, in one-letter code: HTH-type transcriptional repressor FabR (215 aa).

The 61-residue stretch at 10–70 (KTRRSLVEAA…TMVDESGLML (61 aa)) folds into the HTH tetR-type domain. A DNA-binding region (H-T-H motif) is located at residues 33 to 52 (SLREVAREAGIAPTSFYRHF).

Homodimer.

It localises to the cytoplasm. Functionally, represses the transcription of fabB, involved in unsaturated fatty acid (UFA) biosynthesis. By controlling UFA production, FabR directly influences the physical properties of the membrane bilayer. The sequence is that of HTH-type transcriptional repressor FabR from Shigella boydii serotype 18 (strain CDC 3083-94 / BS512).